We begin with the raw amino-acid sequence, 389 residues long: Sterol methyltransferase-like 2 (389 aa).

The helical transmembrane segment at 25–45 threads the bilayer; it reads LSWKGAVGLVAATGIGYVLII.

Belongs to the class I-like SAM-binding methyltransferase superfamily. Erg6/SMT family.

The protein localises to the microsome membrane. Functionally, unable to convert squalene, botryococcene, cycloartenol, zymosterol or lanosterol to mono-, di-, tri- or tetramethylated derivatives. The sequence is that of Sterol methyltransferase-like 2 (SMT-2) from Botryococcus braunii (Green alga).